We begin with the raw amino-acid sequence, 419 residues long: Histidine--tRNA ligase (419 aa).

Belongs to the class-II aminoacyl-tRNA synthetase family. As to quaternary structure, homodimer.

Its subcellular location is the cytoplasm. The enzyme catalyses tRNA(His) + L-histidine + ATP = L-histidyl-tRNA(His) + AMP + diphosphate + H(+). This Caldicellulosiruptor saccharolyticus (strain ATCC 43494 / DSM 8903 / Tp8T 6331) protein is Histidine--tRNA ligase.